The primary structure comprises 518 residues: Glutamate--cysteine ligase (518 aa).

It belongs to the glutamate--cysteine ligase type 1 family. Type 1 subfamily.

It catalyses the reaction L-cysteine + L-glutamate + ATP = gamma-L-glutamyl-L-cysteine + ADP + phosphate + H(+). The protein operates within sulfur metabolism; glutathione biosynthesis; glutathione from L-cysteine and L-glutamate: step 1/2. In Salmonella gallinarum (strain 287/91 / NCTC 13346), this protein is Glutamate--cysteine ligase.